Consider the following 428-residue polypeptide: C4-dicarboxylate transport protein (428 aa).

9 helical membrane-spanning segments follow: residues 8–28, 44–64, 76–96, 142–162, 184–204, 222–242, 289–309, 326–346, and 352–372; these read SLYV…HFYP, LIKM…IAGM, VALL…LIIV, IGAF…LFGF, VIFG…FGAM, LIIC…GSIA, VVGL…SIYL, IFHQ…AAGV, and IVLA…LALI.

Belongs to the dicarboxylate/amino acid:cation symporter (DAACS) (TC 2.A.23) family.

The protein resides in the cell inner membrane. Functionally, responsible for the transport of dicarboxylates such as succinate, fumarate, and malate from the periplasm across the membrane. This Klebsiella pneumoniae subsp. pneumoniae (strain ATCC 700721 / MGH 78578) protein is C4-dicarboxylate transport protein.